Reading from the N-terminus, the 708-residue chain is MLSVRISARQCSVRGLATQANNVSQPAKDNATNGSDAATEKKGTARYQRIQPSVALNSLKTKLSNDFQKQQPAQKIYSQFQSDLQQLISEQQVNPRHFVNSSICNSVLAKLILQSKSELDGQSIGESASIPPTPFEILETYLKYNLARHQHFIIVLKQFLIDLQPKEAINLWISFLEHAKQMPLNNTGTSQVQALTSIAYLMLSKESNSAPDVNVLTQLLNITPSKVPFLAIEQEIKSLGLTATTKDELLKSFDDLLLQWFTADKDAFINEFLKNSNDLKLITYLWKQYLKLATKDFTTSNQEIPGAFMIKLAQLDRSLDAVKIMTQLKEASADFKPSVSLYNSLLQTVAYIPAFGKEAQSIKLNRIQAIWNSYIKSSGNITVASYKAMLEALIIAGHFKTVESFWTLDVPDDVKANSEISDIYLKNFFASVKKVHFSQLKSKIPSKVHNLELANTILLAMVHSDASVGDIDSFYSHTFQSTEGIKPNDKTLAIKLRANLAAFGDSKNESILGTIGLSANSPTATLVIEEFLKICENEESATALLKALNIDNKSNDSAKKVSNFLDYYLQHGNWEYAEELFKKYLTDNVKSPSSVNYRLFNSMFKGFSELSITRNDTGFVSKQQVYWELCQRIHNRIFNECVISTLKSVSALSRRNAEFSENELDFINNTVLPYLVKLKIENSFKLQNPKYLQNMKSNDKIHIPKELL.

The N-terminal 15 residues, 1–15, are a transit peptide targeting the mitochondrion; it reads MLSVRISARQCSVRG. A compositionally biased stretch (polar residues) spans 19-36; it reads QANNVSQPAKDNATNGSD. The segment at 19-44 is disordered; that stretch reads QANNVSQPAKDNATNGSDAATEKKGT.

It localises to the mitochondrion. May be involved in the control of meiotic sister-chromatid recombination. The sequence is that of Meiotic sister-chromatid recombination protein 6, mitochondrial (MSC6) from Kluyveromyces lactis (strain ATCC 8585 / CBS 2359 / DSM 70799 / NBRC 1267 / NRRL Y-1140 / WM37) (Yeast).